A 242-amino-acid polypeptide reads, in one-letter code: MSEGLQRCFVLHRRPYSESSLILDVFSEEYGRVTLMSKGARSKRSNLKGALQPFTPLLLKWSGNGSMKTLRQAEPISLGLPLAGINLYSAMYVNELVGRVLMAEVAMPAFFHDYLHALTELAHNENPEPALRRFELALLSAMGYGVDFLHCAGTGEAIDPSMTYRYREQKGFIASVRRDNLTFMGDELIAISERRFITKEQLKAAKRFTRIALKPYLGGKPLKSRELFMPTIALSRARSIGK.

It belongs to the RecO family.

Involved in DNA repair and RecF pathway recombination. This chain is DNA repair protein RecO, found in Vibrio atlanticus (strain LGP32) (Vibrio splendidus (strain Mel32)).